The sequence spans 352 residues: Serine/threonine-protein phosphatase 2A activator 2 (352 aa).

Belongs to the PTPA-type PPIase family.

The protein localises to the cytoplasm. It catalyses the reaction [protein]-peptidylproline (omega=180) = [protein]-peptidylproline (omega=0). Its function is as follows. PPIases accelerate the folding of proteins. It catalyzes the cis-trans isomerization of proline imidic peptide bonds in oligopeptides. Acts as a regulatory subunit for PP2A-like phosphatases modulating their activity or substrate specificity, probably by inducing a conformational change in the catalytic subunit, a direct target of the PPIase. Can reactivate inactive phosphatase PP2A-phosphatase methylesterase complexes (PP2Ai) in presence of ATP and Mg(2+) by dissociating the inactive form from the complex. In Schizosaccharomyces pombe (strain 972 / ATCC 24843) (Fission yeast), this protein is Serine/threonine-protein phosphatase 2A activator 2 (rrd2).